The chain runs to 970 residues: Glycine dehydrogenase (decarboxylating) (970 aa).

At lysine 723 the chain carries N6-(pyridoxal phosphate)lysine.

The protein belongs to the GcvP family. The glycine cleavage system is composed of four proteins: P, T, L and H. Requires pyridoxal 5'-phosphate as cofactor.

The catalysed reaction is N(6)-[(R)-lipoyl]-L-lysyl-[glycine-cleavage complex H protein] + glycine + H(+) = N(6)-[(R)-S(8)-aminomethyldihydrolipoyl]-L-lysyl-[glycine-cleavage complex H protein] + CO2. Functionally, the glycine cleavage system catalyzes the degradation of glycine. The P protein binds the alpha-amino group of glycine through its pyridoxal phosphate cofactor; CO(2) is released and the remaining methylamine moiety is then transferred to the lipoamide cofactor of the H protein. In Burkholderia pseudomallei (strain 1106a), this protein is Glycine dehydrogenase (decarboxylating).